Reading from the N-terminus, the 167-residue chain is I-Kappa-B like protein I1 (167 aa).

ANK repeat units lie at residues 54–86, 91–121, and 125–154; these read HGKQ…DING, FGNT…NMGI, and LFKT…QCRI.

It belongs to the polydnaviridae I-Kappa-B-like protein family.

Suppresses the host immune response through NF-kappa-B inactivation. Possesses ankyrin repeat domains required for NF-kappa-B binding but lacks the regulatory regions required for dissociation from NF-kappa-B and degradation. Therefore, prevents host NF-kappa-B release and subsequent activation. The sequence is that of I-Kappa-B like protein I1 (I1) from Microplitis demolitor (Parasitoid wasp).